A 562-amino-acid chain; its full sequence is Solute carrier family 22 member 6 (562 aa).

Residues 1-15 are Cytoplasmic-facing; it reads MPFSELLEQVGSTGR. Residues 16-36 form a helical membrane-spanning segment; it reads FQVLHVTLLCIPVLMMASHNL. The Extracellular segment spans residues 37-147; that stretch reads LQNFVATVPS…LVCDMHSFKQ (111 aa). A helical transmembrane segment spans residues 148–168; sequence MGQTIYMGGVLVGALLFGGLS. Over 169-174 the chain is Cytoplasmic; the sequence is DRYGRR. A helical transmembrane segment spans residues 175 to 195; sequence ILLLISNLLMAVSGTCAAFSS. The Extracellular segment spans residues 196 to 205; sequence SFSLFCVFRF. The chain crosses the membrane as a helical span at residues 206–226; it reads GCGLALSGLGLNTFSLIVEWI. The Cytoplasmic portion of the chain corresponds to 227–235; that stretch reads PTRIRTAVG. A helical membrane pass occupies residues 236–256; that stretch reads TTTGYCYTLGQLILVLLAYFI. The Extracellular segment spans residues 257-260; sequence RDWR. Residues 261–281 form a helical membrane-spanning segment; that stretch reads WLTLAVSLPFYVFFLIAWWFH. Topologically, residues 282–351 are cytoplasmic; the sequence is ESSRWLALSN…FNTPAMRKRT (70 aa). A helical membrane pass occupies residues 352 to 372; that stretch reads LCLSAVWLSTSFAYYGLAMDL. Residues 373 to 378 are Extracellular-facing; sequence DKFGVD. The helical transmembrane segment at 379 to 399 threads the bilayer; sequence IYLIQVIFGAVDIPAKVVVVV. Residues 400–408 are Cytoplasmic-facing; the sequence is SMSLIGRRR. The chain crosses the membrane as a helical span at residues 409–429; the sequence is SQCAVLVVAGITILLNLLVPY. Over 430–444 the chain is Extracellular; the sequence is DKQTIRTCLAVLGKG. A helical membrane pass occupies residues 445-465; sequence CLAASFNCCYLYSGELFPTII. Residues 466-468 lie on the Cytoplasmic side of the membrane; it reads RQN. Residues 469–489 traverse the membrane as a helical segment; the sequence is GMGWVSMMARIGAMVAPMVLL. Residues 490-495 are Extracellular-facing; it reads TRDYIP. The helical transmembrane segment at 496–516 threads the bilayer; sequence WLPGLIYGGAPILSGLAAIFL. The Cytoplasmic portion of the chain corresponds to 517-562; sequence PETLGYPLPDTIQDVEESGSGRKSKMSTKETITLQDKQANLLKQSA.

It belongs to the major facilitator (TC 2.A.1) superfamily. Organic cation transporter (TC 2.A.1.19) family. In terms of processing, glycosylated. Glycosylation is necessary for proper targeting of the transporter to the plasma membrane.

It is found in the cell membrane. The protein localises to the basolateral cell membrane. It localises to the basal cell membrane. Its function is as follows. Involved in the renal elimination of endogenous and exogenous organic anions. Functions as organic anion exchanger when the uptake of one molecule of organic anion is coupled with an efflux of one molecule of endogenous dicarboxylic acid (glutarate, ketoglutarate, etc). Mediates the sodium-independent uptake of p-aminohippurate (PAH), 2,3-dimercapto-1-propanesulfonic acid (DMPS), cidofovir, adefovir, 9-(2-phosphonylmethoxyethyl) guanine (PMEG), 9-(2-phosphonylmethoxyethyl) diaminopurine (PMEDAP), ochratoxin (OTA), acyclovir (ACV), 3'-azido-3-'deoxythymidine (AZT), cimetidine (CMD), 2,4-dichloro-phenoxyacetate (2,4-D), hippurate (HA), indoleacetate (IA), indoxyl sulfate (IS), 3-carboxy-4-methyl-5-propyl-2-furanpropionate (CMPF) and edaravone sulfate. Mediates the sodium-independent uptake of p-aminohippurate (PAH). PAH uptake is inhibited by p-chloromercuribenzenesulphonate (PCMBS), diethyl pyrocarbonate (DEPC), indomethacin, sulindac, diclofenac, carprofen, okadaic acid, benzothiazolylcysteine (BTC), S-chlorotrifluoroethylcysteine (CTFC), cysteine S-conjugates S-dichlorovinylcysteine (DCVC), furosemide, steviol, phorbol 12-myristate 13-acetate (PMA), calcium ionophore A23187, benzylpenicillin, bumetamide, losartan, probenecid, phenol red, urate, glutarate and alpha-ketoglutarate. PAH uptake is inhibited by glutarate. This Pseudopleuronectes americanus (Winter flounder) protein is Solute carrier family 22 member 6 (SLC22A6).